The following is a 700-amino-acid chain: Elongation factor G (700 aa).

The tr-type G domain occupies 10 to 286; sequence NKVRNIGIMA…AVIDYLPNPL (277 aa). Residues 19–26, 83–87, and 137–140 each bind GTP; these read AHIDAGKT, DTPGH, and NKMD.

This sequence belongs to the TRAFAC class translation factor GTPase superfamily. Classic translation factor GTPase family. EF-G/EF-2 subfamily.

The protein localises to the cytoplasm. Functionally, catalyzes the GTP-dependent ribosomal translocation step during translation elongation. During this step, the ribosome changes from the pre-translocational (PRE) to the post-translocational (POST) state as the newly formed A-site-bound peptidyl-tRNA and P-site-bound deacylated tRNA move to the P and E sites, respectively. Catalyzes the coordinated movement of the two tRNA molecules, the mRNA and conformational changes in the ribosome. The polypeptide is Elongation factor G (Rhodococcus jostii (strain RHA1)).